The following is a 460-amino-acid chain: ATP synthase subunit beta (460 aa).

150–157 (GGAGVGKT) serves as a coordination point for ATP.

It belongs to the ATPase alpha/beta chains family. As to quaternary structure, F-type ATPases have 2 components, CF(1) - the catalytic core - and CF(0) - the membrane proton channel. CF(1) has five subunits: alpha(3), beta(3), gamma(1), delta(1), epsilon(1). CF(0) has three main subunits: a(1), b(2) and c(9-12). The alpha and beta chains form an alternating ring which encloses part of the gamma chain. CF(1) is attached to CF(0) by a central stalk formed by the gamma and epsilon chains, while a peripheral stalk is formed by the delta and b chains.

The protein resides in the cell inner membrane. It catalyses the reaction ATP + H2O + 4 H(+)(in) = ADP + phosphate + 5 H(+)(out). Its function is as follows. Produces ATP from ADP in the presence of a proton gradient across the membrane. The catalytic sites are hosted primarily by the beta subunits. This is ATP synthase subunit beta from Salmonella paratyphi A (strain ATCC 9150 / SARB42).